Reading from the N-terminus, the 1378-residue chain is DNA-directed RNA polymerase subunit beta (1378 aa).

This sequence belongs to the RNA polymerase beta chain family. In terms of assembly, the RNAP catalytic core consists of 2 alpha, 1 beta, 1 beta' and 1 omega subunit. When a sigma factor is associated with the core the holoenzyme is formed, which can initiate transcription.

The enzyme catalyses RNA(n) + a ribonucleoside 5'-triphosphate = RNA(n+1) + diphosphate. DNA-dependent RNA polymerase catalyzes the transcription of DNA into RNA using the four ribonucleoside triphosphates as substrates. The protein is DNA-directed RNA polymerase subunit beta of Hyphomonas neptunium (strain ATCC 15444).